A 236-amino-acid chain; its full sequence is Phosphoribosylaminoimidazole-succinocarboxamide synthase (236 aa).

The protein belongs to the SAICAR synthetase family.

The enzyme catalyses 5-amino-1-(5-phospho-D-ribosyl)imidazole-4-carboxylate + L-aspartate + ATP = (2S)-2-[5-amino-1-(5-phospho-beta-D-ribosyl)imidazole-4-carboxamido]succinate + ADP + phosphate + 2 H(+). Its pathway is purine metabolism; IMP biosynthesis via de novo pathway; 5-amino-1-(5-phospho-D-ribosyl)imidazole-4-carboxamide from 5-amino-1-(5-phospho-D-ribosyl)imidazole-4-carboxylate: step 1/2. In Pseudomonas savastanoi pv. phaseolicola (strain 1448A / Race 6) (Pseudomonas syringae pv. phaseolicola (strain 1448A / Race 6)), this protein is Phosphoribosylaminoimidazole-succinocarboxamide synthase.